A 178-amino-acid chain; its full sequence is Large ribosomal subunit protein uL6 (178 aa).

This sequence belongs to the universal ribosomal protein uL6 family. In terms of assembly, part of the 50S ribosomal subunit. Interacts weakly with protein L13.

This protein binds to the 23S rRNA, and is important in its secondary structure. It is located near the subunit interface in the base of the L7/L12 stalk, and near the tRNA binding site of the peptidyltransferase center. The sequence is that of Large ribosomal subunit protein uL6 from Haloarcula marismortui (strain ATCC 43049 / DSM 3752 / JCM 8966 / VKM B-1809) (Halobacterium marismortui).